The following is a 220-amino-acid chain: Small ribosomal subunit protein uS3c (220 aa).

The KH type-2 domain maps to 43–120 (IQHYVEKNTR…RLNIAIIRVA (78 aa)).

Belongs to the universal ribosomal protein uS3 family. As to quaternary structure, part of the 30S ribosomal subunit.

It localises to the plastid. The protein localises to the chloroplast. The protein is Small ribosomal subunit protein uS3c (rps3) of Piper cenocladum (Ant piper).